We begin with the raw amino-acid sequence, 247 residues long: NifU-like scaffold protein (247 aa).

Belongs to the NifU family. As to quaternary structure, homodimer.

The protein localises to the plastid. It localises to the apicoplast. Its pathway is cofactor biosynthesis; iron-sulfur cluster biosynthesis. In terms of biological role, binds and transfers [4Fe-4S] iron-sulfur clusters to target proteins. The sequence is that of NifU-like scaffold protein from Plasmodium falciparum (isolate 3D7).